The following is a 163-amino-acid chain: MLKRSSWLAALLGLLTVVSTSTHTYAIELDEATRTVPLESSGRTVILTPEQVKRGKRLFNNSCAICHNGGITKTNPNIGLDPESLGLATPQRDTIEGLVDYMKDPTSYDGAESIAELHPSIKSAEIFPKMRNLTDEDLFTIAGHILLQPKIVSEKWGGGKIYY.

The N-terminal stretch at 1–26 (MLKRSSWLAALLGLLTVVSTSTHTYA) is a signal peptide. 4 residues coordinate heme c: Cys63, Cys66, His67, and His118.

This sequence belongs to the cytochrome c family. PsbV subfamily. As to quaternary structure, PSII is composed of 1 copy each of membrane proteins PsbA, PsbB, PsbC, PsbD, PsbE, PsbF, PsbH, PsbI, PsbJ, PsbK, PsbL, PsbM, PsbT, PsbY, PsbZ, Psb30/Ycf12, at least 3 peripheral proteins of the oxygen-evolving complex and a large number of cofactors. It forms dimeric complexes. The extrinsic subunits in red algae are PsbO (OEC33), PsbQ', cytochrome c-550 and PsbU. It depends on heme c as a cofactor.

The protein localises to the plastid. The protein resides in the chloroplast thylakoid membrane. One of the extrinsic, lumenal subunits of photosystem II (PSII). PSII is a light-driven water plastoquinone oxidoreductase, using light energy to abstract electrons from H(2)O, generating a proton gradient subsequently used for ATP formation. The extrinsic proteins stabilize the structure of photosystem II oxygen-evolving complex (OEC), the ion environment of oxygen evolution and protect the OEC against heat-induced inactivation. The protein is Photosystem II extrinsic protein V of Pyropia yezoensis (Susabi-nori).